The following is a 178-amino-acid chain: RNA-binding protein (178 aa).

The segment at 113 to 178 (PKIGSKNKKT…KGKGKRGGKR (66 aa)) is disordered. Basic residues predominate over residues 168 to 178 (SKGKGKRGGKR).

Belongs to the phytoreovirus RNA-binding protein family.

It localises to the host cytoplasm. Constituent of viral factories. Binds to ssRNA and dsRNA. The protein is RNA-binding protein of Wound tumor virus (WTV).